The primary structure comprises 570 residues: Methionine--tRNA ligase (570 aa).

Positions 11-21 (PYVQTVPHLGN) match the 'HIGH' region motif. Residues C143, C146, C156, and C159 each coordinate Zn(2+). The short motif at 333–337 (KFSKS) is the 'KMSKS' region element. Residue K336 participates in ATP binding.

Belongs to the class-I aminoacyl-tRNA synthetase family. MetG type 1 subfamily. Zn(2+) is required as a cofactor.

It localises to the cytoplasm. The enzyme catalyses tRNA(Met) + L-methionine + ATP = L-methionyl-tRNA(Met) + AMP + diphosphate. Functionally, is required not only for elongation of protein synthesis but also for the initiation of all mRNA translation through initiator tRNA(fMet) aminoacylation. This Pyrobaculum calidifontis (strain DSM 21063 / JCM 11548 / VA1) protein is Methionine--tRNA ligase.